A 1050-amino-acid polypeptide reads, in one-letter code: Transcription intermediary factor 1-alpha (1050 aa).

Lys7 participates in a covalent cross-link: Glycyl lysine isopeptide (Lys-Gly) (interchain with G-Cter in SUMO2). Positions 15 to 30 (ASAAASGGPSAAPSGE) are enriched in low complexity. Positions 15-44 (ASAAASGGPSAAPSGENEAESRQGPDSERG) are disordered. Residues 33–44 (AESRQGPDSERG) show a composition bias toward basic and acidic residues. The segment at 56–82 (CAVCHQNIQSRAPKLLPCLHSFCQRCL) adopts an RING-type zinc-finger fold. Thr101 is modified (phosphothreonine). Ser110 carries the phosphoserine modification. 2 consecutive B box-type zinc fingers follow at residues 158–211 (KSNQ…VSPE) and 218–259 (QRPV…YQFI). Residues Cys163, Cys166, Cys187, and His200 each contribute to the Zn(2+) site. A Glycyl lysine isopeptide (Lys-Gly) (interchain with G-Cter in SUMO2) cross-link involves residue Lys205. The Zn(2+) site is built by Cys223, His226, Cys246, and His251. Lys276 is covalently cross-linked (Glycyl lysine isopeptide (Lys-Gly) (interchain with G-Cter in SUMO2)). The stretch at 289–359 (NQIQNRIIEV…AGLSKQLEHV (71 aa)) forms a coiled coil. A disordered region spans residues 429-456 (ESQPQMPKQNPVVEQNSQPPSGLSSNQL). Residues 431–456 (QPQMPKQNPVVEQNSQPPSGLSSNQL) show a composition bias toward polar residues. Residues Lys436 and Lys458 each participate in a glycyl lysine isopeptide (Lys-Gly) (interchain with G-Cter in SUMO2) cross-link. The residue at position 469 (Arg469) is an Omega-N-methylarginine. Low complexity-rich tracts occupy residues 476–490 (QVMA…RPAP) and 499–510 (QGPIQQPSISHQ). The disordered stretch occupies residues 476 to 550 (QVMAQRQQVQ…PPNQNIPRQA (75 aa)). The segment covering 526 to 535 (PNGPVLPPHP) has biased composition (pro residues). Residue Lys552 forms a Glycyl lysine isopeptide (Lys-Gly) (interchain with G-Cter in SUMO2) linkage. The interval 571–594 (ISSGQGTPSTTNSTSSTPSSPTIT) is disordered. Positions 577-594 (TPSTTNSTSSTPSSPTIT) are enriched in low complexity. Lys641 is covalently cross-linked (Glycyl lysine isopeptide (Lys-Gly) (interchain with G-Cter in SUMO2)). Residues 643–712 (TNIDHGQPRP…PAGADSTHKV (70 aa)) are disordered. Phosphoserine occurs at positions 654, 660, and 667. Over residues 654–666 (SNRTVQSPNSSVP) the composition is skewed to polar residues. Residues 685–707 (SPSASSVGSRGSSGSSSKPAGAD) are compositionally biased toward low complexity. Glycyl lysine isopeptide (Lys-Gly) (interchain with G-Cter in SUMO2) cross-links involve residues Lys702 and Lys711. A Glycyl lysine isopeptide (Lys-Gly) (interchain with G-Cter in SUMO1); alternate cross-link involves residue Lys723. Lys723 participates in a covalent cross-link: Glycyl lysine isopeptide (Lys-Gly) (interchain with G-Cter in SUMO2); alternate. Lys741 is covalently cross-linked (Glycyl lysine isopeptide (Lys-Gly) (interchain with G-Cter in SUMO2)). The residue at position 744 (Ser744) is a Phosphoserine. Positions 754–779 (NYPRSILTSLLLNSSQSSTSEETVLR) are nuclear receptor binding site (NRBS). The tract at residues 766-824 (NSSQSSTSEETVLRSDAPDSTGDQPGLHQDNSSNGKSEWLDPSQKSPLHVGETRKEDDP) is disordered. Ser768 is modified (phosphoserine; by ATM). Lys801 is covalently cross-linked (Glycyl lysine isopeptide (Lys-Gly) (interchain with G-Cter in SUMO2)). Position 808 is a phosphoserine (Ser808). Residue Lys810 forms a Glycyl lysine isopeptide (Lys-Gly) (interchain with G-Cter in SUMO2) linkage. A Phosphoserine modification is found at Ser811. A Phosphothreonine modification is found at Thr818. Residues 826–873 (EDWCAVCQNGGELLCCEKCPKVFHLSCHVPTLTNFPSGEWICTFCRDL) form a PHD-type zinc finger. Residues 834-840 (NGGELLC) are interaction with histone H3 that is not methylated at 'Lys-4' (H3K4me0). Residue Lys875 forms a Glycyl lysine isopeptide (Lys-Gly) (interchain with G-Cter in SUMO2) linkage. Residues 891-907 (KKKTEGLVKLTPIDKRK) carry the Nuclear localization signal motif. A Bromo domain is found at 899 to 1004 (KLTPIDKRKC…NYFEELLKNL (106 aa)). Lys949 participates in a covalent cross-link: Glycyl lysine isopeptide (Lys-Gly) (interchain with G-Cter in SUMO2). Residues 979-980 (FN) form an interaction with histone H3 that is acetylated at 'Lys-23' (H3K23ac) region. Lys992 participates in a covalent cross-link: Glycyl lysine isopeptide (Lys-Gly) (interchain with G-Cter in SUMO2). Positions 1011-1026 (PKPEFRNESEDNKFSD) are enriched in basic and acidic residues. The segment at 1011–1036 (PKPEFRNESEDNKFSDDSDDDFVQPR) is disordered. Ser1019, Ser1025, and Ser1028 each carry phosphoserine. Residue Lys1041 forms a Glycyl lysine isopeptide (Lys-Gly) (interchain with G-Cter in SUMO2) linkage. The residue at position 1042 (Ser1042) is a Phosphoserine.

Interacts with CARM1, NCOA2/GRIP1, PML, KAT5/TIP60, BRD7, CBX1, CBX3 and CBX5. Part of a coactivator complex containing TRIM24, NCOA2 and CARM1. Interacts with NR3C2/MCR. Interacts with the ligand-binding domain of estrogen receptors (in vitro). Interaction with DNA-bound estrogen receptors requires the presence of estradiol. Interacts with AR and p53/TP53. Interacts (via bromo domain) with histone H3 (via N-terminus), provided that it is not methylated at 'Lys-4' (H3K4me0). Does not interact with histone H3 that is methylated at 'Lys-4' (H3K4me1, H3K4me2 or H3K4me3). Interacts (via bromo domain) with histone H3 (via N-terminus) that is acetylated at 'Lys-23' (H3K23ac). Has the highest affinity for histone H3 that is both unmodified at 'Lys-4' (H3K4me0) and acetylated at 'Lys-23' (H3K23ac). Has very low affinity for histone H3 that is methylated at 'Lys-9' (H3K9me), or acetylated at both 'Lys-9' (H3K9ac) and 'Lys-14' (H3K14ac), or acetylated at 'Lys-27' (H3K27ac) (in vitro). Interacts with TRIM16. Phosphorylated at Ser-768 by ATM kinase induces ubiquitination and degradation during DNA damage. Post-translationally, sumoylated. In terms of processing, undergoes ubiquitination-mediated degradation in response to DNA damage.

It is found in the nucleus. The protein localises to the cytoplasm. The protein resides in the mitochondrion. It catalyses the reaction S-ubiquitinyl-[E2 ubiquitin-conjugating enzyme]-L-cysteine + [acceptor protein]-L-lysine = [E2 ubiquitin-conjugating enzyme]-L-cysteine + N(6)-ubiquitinyl-[acceptor protein]-L-lysine.. Its pathway is protein modification; protein ubiquitination. Functionally, transcriptional coactivator that interacts with numerous nuclear receptors and coactivators and modulates the transcription of target genes. Interacts with chromatin depending on histone H3 modifications, having the highest affinity for histone H3 that is both unmodified at 'Lys-4' (H3K4me0) and acetylated at 'Lys-23' (H3K23ac). Has E3 protein-ubiquitin ligase activity. During the DNA damage response, participates in an autoregulatory feedback loop with TP53. Early in response to DNA damage, ATM kinase phosphorylates TRIM24 leading to its ubiquitination and degradation. After sufficient DNA repair has occurred, TP53 activates TRIM24 transcription, ultimately leading to TRIM24-mediated TP53 ubiquitination and degradation. Plays a role in the regulation of cell proliferation and apoptosis, at least in part via its effects on p53/TP53 levels. Up-regulates ligand-dependent transcription activation by AR, GCR/NR3C1, thyroid hormone receptor (TR) and ESR1. Modulates transcription activation by retinoic acid (RA) receptors, including RARA. Plays a role in regulating retinoic acid-dependent proliferation of hepatocytes. Also participates in innate immunity by mediating the specific 'Lys-63'-linked ubiquitination of TRAF3 leading to activation of downstream signal transduction of the type I IFN pathway. Additionally, negatively regulates NLRP3/CASP1/IL-1beta-mediated pyroptosis and cell migration probably by ubiquitinating NLRP3. The protein is Transcription intermediary factor 1-alpha (TRIM24) of Homo sapiens (Human).